The following is a 179-amino-acid chain: Gut granule loss protein 3 (179 aa).

The tract at residues Asp40–Ser59 is disordered. Residues Asp42–Thr54 are compositionally biased toward polar residues.

This chain is Gut granule loss protein 3 (glo-3), found in Caenorhabditis elegans.